Here is a 350-residue protein sequence, read N- to C-terminus: Phosphoribosylformylglycinamidine cyclo-ligase (350 aa).

The protein belongs to the AIR synthase family.

It is found in the cytoplasm. The enzyme catalyses 2-formamido-N(1)-(5-O-phospho-beta-D-ribosyl)acetamidine + ATP = 5-amino-1-(5-phospho-beta-D-ribosyl)imidazole + ADP + phosphate + H(+). It participates in purine metabolism; IMP biosynthesis via de novo pathway; 5-amino-1-(5-phospho-D-ribosyl)imidazole from N(2)-formyl-N(1)-(5-phospho-D-ribosyl)glycinamide: step 2/2. The chain is Phosphoribosylformylglycinamidine cyclo-ligase from Syntrophotalea carbinolica (strain DSM 2380 / NBRC 103641 / GraBd1) (Pelobacter carbinolicus).